Consider the following 441-residue polypeptide: Endothelin receptor type B (441 aa).

An N-terminal signal peptide occupies residues 1–26; sequence MQPPPSLCGLALLALVLACGMAEVWG. Residues 27 to 100 are Extracellular-facing; it reads EEREMPSAPA…RPTEIKDTFK (74 aa). The segment at 30–90 is disordered; sequence EMPSAPATPP…APRRTPPPCQ (61 aa). Over residues 47–65 the composition is skewed to polar residues; it reads LTPSTKTSWPRDSNASLPR. Asparagine 60 is a glycosylation site (N-linked (GlcNAc...) asparagine). Residues 101–125 form a helical membrane-spanning segment; sequence YINTVVSCLVFVLGIIGNSTLLRII. Over 126 to 136 the chain is Cytoplasmic; it reads YKNKCMRNGPN. A helical transmembrane segment spans residues 137–162; sequence ILIASLALGDLLHIIIDIPINVYKLL. Residues 163–174 lie on the Extracellular side of the membrane; that stretch reads AEDWPFGAEMCK. Residues cysteine 173 and cysteine 254 are joined by a disulfide bond. A helical transmembrane segment spans residues 175 to 196; the sequence is LVPFIQKASVGITVLSLCALSI. At 197-217 the chain is on the cytoplasmic side; it reads DRYRAVASWSRIKGIGVPKWT. Residues 218-242 traverse the membrane as a helical segment; the sequence is AVEIVLIWVVSVILAVPEAIGFNLV. The Extracellular portion of the chain corresponds to 243-270; that stretch reads TIDYKGSYLRICLLNPTQKTAFMQFYKT. The helical transmembrane segment at 271-295 threads the bilayer; it reads AKDWWLFSFYFCLPLAITAFFYTLM. At 296–323 the chain is on the cytoplasmic side; the sequence is TCEMLRKKSGMQIALNDHLKQRREVAKT. Phosphoserine is present on serine 304. Residues 324 to 349 form a helical membrane-spanning segment; the sequence is VFCLVLVFGLCWLALHLSRILKLTLY. Over 350–361 the chain is Extracellular; sequence DQNDPNRCELLS. The helical transmembrane segment at 362 to 388 threads the bilayer; sequence FLLVLDYIGINMASLNSCINPIALYLV. Residues 389-441 lie on the Cytoplasmic side of the membrane; the sequence is SKRFKNCFKSCLCCWCQSFEEKQSLEEKQSCLKFKANDHGYDNFRSSNKYSSS. 2 S-palmitoyl cysteine lipidation sites follow: cysteine 402 and cysteine 404. Residue serine 418 is modified to Phosphoserine. Tyrosine 438 is modified (phosphotyrosine). Residues serine 439, serine 440, and serine 441 each carry the phosphoserine modification.

The protein belongs to the G-protein coupled receptor 1 family. Endothelin receptor subfamily. EDNRB sub-subfamily.

It localises to the cell membrane. Non-specific receptor for endothelin 1, 2, and 3. Mediates its action by association with G proteins that activate a phosphatidylinositol-calcium second messenger system. The polypeptide is Endothelin receptor type B (EDNRB) (Oryctolagus cuniculus (Rabbit)).